The following is a 507-amino-acid chain: DNA ligase B (507 aa).

The not required for adenylyltransferase activity, required for nick joining stretch occupies residues 1-172 (MLLHDVAITS…AAAAGLSGAA (172 aa)). Glu-209 contacts ATP. Residue Lys-211 is the N6-AMP-lysine intermediate of the active site. ATP-binding residues include Arg-216, Arg-231, Glu-260, Phe-300, Arg-372, and Lys-378.

It belongs to the ATP-dependent DNA ligase family. As to quaternary structure, monomer. Mg(2+) serves as cofactor.

It catalyses the reaction ATP + (deoxyribonucleotide)n-3'-hydroxyl + 5'-phospho-(deoxyribonucleotide)m = (deoxyribonucleotide)n+m + AMP + diphosphate.. In terms of biological role, DNA ligase that seals nicks in double-stranded DNA during DNA replication, DNA recombination and DNA repair. The polypeptide is DNA ligase B (ligB) (Mycobacterium tuberculosis (strain ATCC 25618 / H37Rv)).